The chain runs to 627 residues: DNA mismatch repair protein MutL (627 aa).

The disordered stretch occupies residues 363–397 (FAEPAAREPVAPRYSPAPASGSRPAAPWPNAQPGY). A compositionally biased stretch (low complexity) spans 364–387 (AEPAAREPVAPRYSPAPASGSRPA).

It belongs to the DNA mismatch repair MutL/HexB family.

Functionally, this protein is involved in the repair of mismatches in DNA. It is required for dam-dependent methyl-directed DNA mismatch repair. May act as a 'molecular matchmaker', a protein that promotes the formation of a stable complex between two or more DNA-binding proteins in an ATP-dependent manner without itself being part of a final effector complex. The polypeptide is DNA mismatch repair protein MutL (Shigella flexneri serotype 5b (strain 8401)).